The chain runs to 288 residues: Cyclin-dependent kinase 2 homolog (288 aa).

In terms of domain architecture, Protein kinase spans 4–284 (YHGLEKIGEG…AKQAIEHPYF (281 aa)). ATP is bound by residues 10–18 (IGEGTYGVV) and Lys-32. Residue Thr-14 is modified to Phosphothreonine. Tyr-15 is modified (phosphotyrosine). The active-site Proton acceptor is the Asp-125. Thr-158 is modified (phosphothreonine).

Belongs to the protein kinase superfamily. CMGC Ser/Thr protein kinase family. CDC2/CDKX subfamily. As to quaternary structure, may form a complex composed of at least the catalytic subunit CRK2 and a cyclin. The cofactor is Mg(2+).

It is found in the cytoplasm. The enzyme catalyses L-seryl-[protein] + ATP = O-phospho-L-seryl-[protein] + ADP + H(+). It carries out the reaction L-threonyl-[protein] + ATP = O-phospho-L-threonyl-[protein] + ADP + H(+). The catalysed reaction is [DNA-directed RNA polymerase] + ATP = phospho-[DNA-directed RNA polymerase] + ADP + H(+). Phosphorylation at Thr-14 or Tyr-15 inactivates the enzyme, while phosphorylation at Thr-158 activates it. Functionally, serine/threonine-protein kinase. Involved in the control of the cell cycle. Required for entry into S-phase and mitosis. Probable component of the kinase complex that phosphorylates the repetitive C-terminus of RNA polymerase II. This chain is Cyclin-dependent kinase 2 homolog, found in Plasmodium chabaudi chabaudi.